We begin with the raw amino-acid sequence, 172 residues long: Peptidyl-prolyl cis-trans isomerase (172 aa).

The PPIase cyclophilin-type domain occupies 7 to 170 (FFDMAIAGNP…RPVTIADCGQ (164 aa)).

The protein belongs to the cyclophilin-type PPIase family. Expressed in meristematic tissues, with higher levels in nodules.

It localises to the cytoplasm. It catalyses the reaction [protein]-peptidylproline (omega=180) = [protein]-peptidylproline (omega=0). With respect to regulation, binds cyclosporin A (CsA). CsA mediates some of its effects via an inhibitory action on PPIase. In terms of biological role, PPIases accelerate the folding of proteins. It catalyzes the cis-trans isomerization of proline imidic peptide bonds in oligopeptides. This is Peptidyl-prolyl cis-trans isomerase from Lupinus luteus (European yellow lupine).